The following is a 307-amino-acid chain: Glutenin, low molecular weight subunit 1D1 (307 aa).

The first 23 residues, 1 to 23 (MKTFLVFALLAVAATSAIAQMET), serve as a signal peptide directing secretion. Disordered stretches follow at residues 31 to 88 (RPWQ…ILPQ) and 105 to 126 (PFSQ…QQQQ). Over residues 43-88 (TFPQQPLFSQQQQQQLFPQQPSFSQQQPPFWQQQPPFSQQQPILPQ) the composition is skewed to low complexity.

Belongs to the gliadin/glutenin family. As to quaternary structure, disulfide-bridge linked aggregates. As to expression, expressed in endosperm, but not in husk and leaf tissues.

Glutenins are high-molecular weight seed storage proteins of wheat endosperm. Thought to be responsible for the visco-elastic property of wheat dough. The sequence is that of Glutenin, low molecular weight subunit 1D1 from Triticum aestivum (Wheat).